A 79-amino-acid chain; its full sequence is Putative membrane protein insertion efficiency factor (79 aa).

This sequence belongs to the UPF0161 family.

The protein resides in the cell inner membrane. Its function is as follows. Could be involved in insertion of integral membrane proteins into the membrane. The chain is Putative membrane protein insertion efficiency factor from Prochlorococcus marinus (strain SARG / CCMP1375 / SS120).